Consider the following 121-residue polypeptide: Small ribosomal subunit protein uS13 (121 aa).

A disordered region spans residues 99 to 121; that stretch reads RGQRTRTNSRTRKGPRRKIMKKK. A compositionally biased stretch (basic residues) spans 101–121; that stretch reads QRTRTNSRTRKGPRRKIMKKK.

It belongs to the universal ribosomal protein uS13 family. As to quaternary structure, part of the 30S ribosomal subunit. Forms a loose heterodimer with protein S19. Forms two bridges to the 50S subunit in the 70S ribosome.

In terms of biological role, located at the top of the head of the 30S subunit, it contacts several helices of the 16S rRNA. In the 70S ribosome it contacts the 23S rRNA (bridge B1a) and protein L5 of the 50S subunit (bridge B1b), connecting the 2 subunits; these bridges are implicated in subunit movement. Contacts the tRNAs in the A and P-sites. In Thermodesulfovibrio yellowstonii (strain ATCC 51303 / DSM 11347 / YP87), this protein is Small ribosomal subunit protein uS13.